A 130-amino-acid polypeptide reads, in one-letter code: Small ribosomal subunit protein uS8 (130 aa).

It belongs to the universal ribosomal protein uS8 family. Part of the 30S ribosomal subunit.

Functionally, one of the primary rRNA binding proteins, it binds directly to 16S rRNA central domain where it helps coordinate assembly of the platform of the 30S subunit. This is Small ribosomal subunit protein uS8 from Methanococcus maripaludis (strain C7 / ATCC BAA-1331).